Reading from the N-terminus, the 365-residue chain is Poly(rC)-binding protein 2 (365 aa).

KH domains are found at residues 13 to 75 (TLTI…FAMI) and 97 to 162 (PVTL…VKQI). Lys-115 participates in a covalent cross-link: Glycyl lysine isopeptide (Lys-Gly) (interchain with G-Cter in SUMO2). The residue at position 173 (Ser-173) is a Phosphoserine. Lys-185 is covalently cross-linked (Glycyl lysine isopeptide (Lys-Gly) (interchain with G-Cter in SUMO2)). Residues Ser-189 and Ser-272 each carry the phosphoserine modification. One can recognise a KH 3 domain in the interval 287–351 (TTSHELTIPN…ASISLAQYLI (65 aa)). Lys-322 is covalently cross-linked (Glycyl lysine isopeptide (Lys-Gly) (interchain with G-Cter in SUMO2)). Residues Ser-364 and Ser-365 each carry the phosphoserine modification.

Identified in a mRNP complex, at least composed of DHX9, DDX3X, ELAVL1, HNRNPU, IGF2BP1, ILF3, PABPC1, PCBP2, PTBP2, STAU1, STAU2, SYNCRIP and YBX1. Interacts with IFIH1 and RNF135. Interacts with MAVS (via C-terminus) and ITCH (via WW domains). Interacts with CGAS; preventing the formation of liquid-like droplets in which CGAS is activated. In terms of processing, phosphorylated. The non-phosphorylated form(s) exhibited the strongest poly(rC)-binding activity. Post-translationally, (Microbial infection) Proteolytically cleaved by picornavirus proteinase 3CD. Detected in all tissues examined.

It is found in the nucleus. The protein resides in the cytoplasm. In terms of biological role, single-stranded nucleic acid binding protein that binds preferentially to oligo dC. Major cellular poly(rC)-binding protein. Also binds poly(rU). Acts as a negative regulator of antiviral signaling. Negatively regulates cellular antiviral responses mediated by MAVS signaling. It acts as an adapter between MAVS and the E3 ubiquitin ligase ITCH, therefore triggering MAVS ubiquitination and degradation. Negativeley regulates the cGAS-STING pathway via interaction with CGAS, preventing the formation of liquid-like droplets in which CGAS is activated. Together with PCBP1, required for erythropoiesis, possibly by regulating mRNA splicing. (Microbial infection) In case of infection by poliovirus, binds to the viral internal ribosome entry site (IRES) and stimulates the IRES-mediated translation. Also plays a role in initiation of viral RNA replication in concert with the viral protein 3CD. This Homo sapiens (Human) protein is Poly(rC)-binding protein 2.